We begin with the raw amino-acid sequence, 176 residues long: MSRVAKAPVAIPAGVEVTLNEQTITVKGTKGSLTRVINSDVSVVVEDNEIKCSPVESAKTAAQAGTARALINNMVVGVTEGFVKKLTLVGVGYRAKLAGKDIDLTLGFSHPLVHKLPDGVTAECPSQTEIVLSGTDKQLIGQVAAEIRGYRPPEPYKGKGVRYADEQVRRKEAKKK.

Residues 151–170 (RPPEPYKGKGVRYADEQVRR) are compositionally biased toward basic and acidic residues. Positions 151 to 176 (RPPEPYKGKGVRYADEQVRRKEAKKK) are disordered.

This sequence belongs to the universal ribosomal protein uL6 family. As to quaternary structure, part of the 50S ribosomal subunit.

In terms of biological role, this protein binds to the 23S rRNA, and is important in its secondary structure. It is located near the subunit interface in the base of the L7/L12 stalk, and near the tRNA binding site of the peptidyltransferase center. This is Large ribosomal subunit protein uL6 from Shewanella halifaxensis (strain HAW-EB4).